The following is a 113-amino-acid chain: U11-theraphotoxin-Hhn1a (113 aa).

The first 21 residues, 1-21, serve as a signal peptide directing secretion; it reads MNTVRVTFLLVFVLAVSLGQA. Residues 22–74 constitute a propeptide that is removed on maturation; it reads DKDENRMEMQEKAEQGKSYLDFAENLLLQKLEELEAKLLEEDSEESRNSRQKR. Cystine bridges form between cysteine 75–cysteine 90, cysteine 82–cysteine 95, and cysteine 89–cysteine 110.

It belongs to the neurotoxin 14 (magi-1) family. 01 (HNTX-16) subfamily. As to expression, expressed by the venom gland.

The protein resides in the secreted. Its function is as follows. Probable ion channel inhibitor. This is U11-theraphotoxin-Hhn1a from Cyriopagopus hainanus (Chinese bird spider).